The primary structure comprises 266 residues: Energy-coupling factor transporter transmembrane protein EcfT (266 aa).

A run of 7 helical transmembrane segments spans residues 26–46 (VIAT…RSVT), 47–67 (LAGL…HYIL), 69–89 (GIKP…LSTP), 116–136 (LIWL…IALT), 151–171 (LPVH…PTLI), 192–212 (SLVA…LSAF), and 246–266 (YAVT…KKAL).

It belongs to the energy-coupling factor EcfT family. In terms of assembly, forms a stable energy-coupling factor (ECF) transporter complex composed of 2 membrane-embedded substrate-binding proteins (S component), 2 ATP-binding proteins (A component) and 2 transmembrane proteins (T component). May be able to interact with more than 1 S component at a time.

Its subcellular location is the cell membrane. In terms of biological role, transmembrane (T) component of an energy-coupling factor (ECF) ABC-transporter complex. Unlike classic ABC transporters this ECF transporter provides the energy necessary to transport a number of different substrates. In Heliobacterium modesticaldum (strain ATCC 51547 / Ice1), this protein is Energy-coupling factor transporter transmembrane protein EcfT.